The primary structure comprises 749 residues: Poly(U)-binding-splicing factor rnp-6 (749 aa).

RRM domains lie at 102 to 176 (SRIY…LKVN) and 207 to 285 (FRVY…KCVT). Disordered regions lie at residues 323–388 (AGSS…PDVV) and 457–480 (IEEEEEARTERVKLSTSQRKKMKR). Low complexity predominate over residues 330-354 (PSESGGSRAASPAPRAQSPATPSSS). An RRM 3; atypical domain is found at 658–739 (NVIVLRNMVT…NTVKAEAYDQ (82 aa)).

The protein belongs to the RRM half pint family.

The protein resides in the nucleus. Its function is as follows. DNA- and RNA-binding protein, involved in several nuclear processes such as pre-mRNA splicing, apoptosis and transcription regulation. Ensures the correct splicing of genes involved in immunity to promote longevity in response to infection by pathogenic bacteria such as S.aureus. This is Poly(U)-binding-splicing factor rnp-6 from Caenorhabditis elegans.